A 326-amino-acid polypeptide reads, in one-letter code: Nicotianamine synthase 2 (326 aa).

Belongs to the nicotianamine synthase (NAS)-like family. Expressed in roots.

The catalysed reaction is 3 S-adenosyl-L-methionine = nicotianamine + 3 S-methyl-5'-thioadenosine + 3 H(+). In terms of biological role, synthesizes nicotianamine, a polyamine that is the first intermediate in the synthesis of the phytosiderophores of the mugineic acid type found in gramineae which serve as a sensor for the physiological iron status within the plant, and/or might be involved in the transport of iron. In Oryza sativa subsp. indica (Rice), this protein is Nicotianamine synthase 2 (NAS2).